Reading from the N-terminus, the 439-residue chain is Dihydroorotase (439 aa).

Zn(2+)-binding residues include H73 and H75. Substrate is bound by residues 75–77 and N107; that span reads HLR. Residues D165, H192, and H245 each coordinate Zn(2+). Residue N291 participates in substrate binding. A Zn(2+)-binding site is contributed by D318. Residue D318 is part of the active site. Position 322 (H322) interacts with substrate.

The protein belongs to the metallo-dependent hydrolases superfamily. DHOase family. Class I DHOase subfamily. It depends on Zn(2+) as a cofactor.

It carries out the reaction (S)-dihydroorotate + H2O = N-carbamoyl-L-aspartate + H(+). It functions in the pathway pyrimidine metabolism; UMP biosynthesis via de novo pathway; (S)-dihydroorotate from bicarbonate: step 3/3. In terms of biological role, catalyzes the reversible cyclization of carbamoyl aspartate to dihydroorotate. The polypeptide is Dihydroorotase (Syntrophobacter fumaroxidans (strain DSM 10017 / MPOB)).